We begin with the raw amino-acid sequence, 283 residues long: Pantothenate synthetase (283 aa).

30–37 (MGYFHDGH) contacts ATP. Catalysis depends on His-37, which acts as the Proton donor. Gln-61 serves as a coordination point for (R)-pantoate. Gln-61 serves as a coordination point for beta-alanine. Residue 147–150 (GSKD) coordinates ATP. Gln-153 contacts (R)-pantoate. ATP-binding positions include Val-176 and 184 to 187 (MSSR).

The protein belongs to the pantothenate synthetase family. Homodimer.

The protein resides in the cytoplasm. The catalysed reaction is (R)-pantoate + beta-alanine + ATP = (R)-pantothenate + AMP + diphosphate + H(+). It functions in the pathway cofactor biosynthesis; (R)-pantothenate biosynthesis; (R)-pantothenate from (R)-pantoate and beta-alanine: step 1/1. Its function is as follows. Catalyzes the condensation of pantoate with beta-alanine in an ATP-dependent reaction via a pantoyl-adenylate intermediate. In Desulforapulum autotrophicum (strain ATCC 43914 / DSM 3382 / VKM B-1955 / HRM2) (Desulfobacterium autotrophicum), this protein is Pantothenate synthetase.